The following is a 315-amino-acid chain: Small ribosomal subunit protein uS2 (315 aa).

The interval 250–315 (LLEQGDAAKA…TESEKAPVSE (66 aa)) is disordered. Composition is skewed to basic and acidic residues over residues 272-282 (VSAKNEAKSED) and 297-315 (TEAK…PVSE).

It belongs to the universal ribosomal protein uS2 family.

This Clavibacter michiganensis subsp. michiganensis (strain NCPPB 382) protein is Small ribosomal subunit protein uS2.